The following is a 260-amino-acid chain: Major prion protein (260 aa).

An N-terminal signal peptide occupies residues 1 to 22 (MANLGCWMLVLFVATWSDLGLC). An interaction with GRB2, ERI3 and SYN1 region spans residues 23–237 (KKRPKPGGWN…ESQAYYQRGS (215 aa)). The segment at 26–112 (PKPGGWNTGG…HNQWNKPSKP (87 aa)) is disordered. 6 consecutive repeat copies span residues 51–58 (PQGGGWGQ), 59–66 (PHGGGWGQ), 67–74 (PHGGGWGQ), 75–82 (PHGGGWGQ), 83–90 (PHGGGWGQ), and 91–98 (PHGGGWGQ). The 6 X 8 AA tandem repeats of P-H-G-G-G-W-G-Q stretch occupies residues 51-98 (PQGGGWGQPHGGGWGQPHGGGWGQPHGGGWGQPHGGGWGQPHGGGWGQ). A compositionally biased stretch (gly residues) spans 52-102 (QGGGWGQPHGGGWGQPHGGGWGQPHGGGWGQPHGGGWGQPHGGGWGQGGGT). Cu(2+)-binding residues include His68, Gly69, Gly70, His76, Gly77, Gly78, His84, Gly85, Gly86, His92, Gly93, and Gly94. Residues Cys186 and Cys221 are joined by a disulfide bond. Residues Asn188 and Asn204 are each glycosylated (N-linked (GlcNAc...) asparagine). A lipid anchor (GPI-anchor amidated serine) is attached at Ser237. A propeptide spans 238 to 260 (SMVLFSSPPVILLISFLIFLIVG) (removed in mature form).

It belongs to the prion family. Monomer and homodimer. Has a tendency to aggregate into amyloid fibrils containing a cross-beta spine, formed by a steric zipper of superposed beta-strands. Soluble oligomers may represent an intermediate stage on the path to fibril formation. Copper binding may promote oligomerization. Interacts with GRB2, APP, ERI3/PRNPIP and SYN1. Mislocalized cytosolically exposed PrP interacts with MGRN1; this interaction alters MGRN1 subcellular location and causes lysosomal enlargement. Interacts with KIAA1191.

Its subcellular location is the cell membrane. It is found in the golgi apparatus. In terms of biological role, its primary physiological function is unclear. Has cytoprotective activity against internal or environmental stresses. May play a role in neuronal development and synaptic plasticity. May be required for neuronal myelin sheath maintenance. May play a role in iron uptake and iron homeostasis. Soluble oligomers are toxic to cultured neuroblastoma cells and induce apoptosis (in vitro). Association with GPC1 (via its heparan sulfate chains) targets PRNP to lipid rafts. Also provides Cu(2+) or Zn(2+) for the ascorbate-mediated GPC1 deaminase degradation of its heparan sulfate side chains. In Saimiri sciureus (Common squirrel monkey), this protein is Major prion protein (PRNP).